A 202-amino-acid polypeptide reads, in one-letter code: Glycerol-3-phosphate acyltransferase (202 aa).

Transmembrane regions (helical) follow at residues 11 to 31 (ALIA…GLIL), 87 to 107 (PALA…WLGF), 116 to 136 (FIGV…AIWL), and 158 to 178 (VILW…LAAL).

The protein belongs to the PlsY family. In terms of assembly, probably interacts with PlsX.

The protein resides in the cell inner membrane. The catalysed reaction is an acyl phosphate + sn-glycerol 3-phosphate = a 1-acyl-sn-glycero-3-phosphate + phosphate. The protein operates within lipid metabolism; phospholipid metabolism. Functionally, catalyzes the transfer of an acyl group from acyl-phosphate (acyl-PO(4)) to glycerol-3-phosphate (G3P) to form lysophosphatidic acid (LPA). This enzyme utilizes acyl-phosphate as fatty acyl donor, but not acyl-CoA or acyl-ACP. The protein is Glycerol-3-phosphate acyltransferase of Methylorubrum populi (strain ATCC BAA-705 / NCIMB 13946 / BJ001) (Methylobacterium populi).